We begin with the raw amino-acid sequence, 342 residues long: N-acetyl-gamma-glutamyl-phosphate reductase (342 aa).

The active site involves Cys-149.

This sequence belongs to the NAGSA dehydrogenase family. Type 1 subfamily.

It is found in the cytoplasm. It catalyses the reaction N-acetyl-L-glutamate 5-semialdehyde + phosphate + NADP(+) = N-acetyl-L-glutamyl 5-phosphate + NADPH + H(+). Its pathway is amino-acid biosynthesis; L-arginine biosynthesis; N(2)-acetyl-L-ornithine from L-glutamate: step 3/4. Its function is as follows. Catalyzes the NADPH-dependent reduction of N-acetyl-5-glutamyl phosphate to yield N-acetyl-L-glutamate 5-semialdehyde. This is N-acetyl-gamma-glutamyl-phosphate reductase from Jannaschia sp. (strain CCS1).